The following is a 484-amino-acid chain: Ribosomal RNA small subunit methyltransferase F (484 aa).

Residues 126–132 (AAAPGSK), Glu-150, Asp-177, and Asp-195 each bind S-adenosyl-L-methionine. The Nucleophile role is filled by Cys-248.

It belongs to the class I-like SAM-binding methyltransferase superfamily. RsmB/NOP family.

The protein resides in the cytoplasm. The enzyme catalyses cytidine(1407) in 16S rRNA + S-adenosyl-L-methionine = 5-methylcytidine(1407) in 16S rRNA + S-adenosyl-L-homocysteine + H(+). In terms of biological role, specifically methylates the cytosine at position 1407 (m5C1407) of 16S rRNA. This chain is Ribosomal RNA small subunit methyltransferase F, found in Pectobacterium carotovorum subsp. carotovorum (strain PC1).